We begin with the raw amino-acid sequence, 30 residues long: Sillucin (30 aa).

Disulfide bonds link cysteine 2–cysteine 7, cysteine 12–cysteine 24, cysteine 13–cysteine 30, and cysteine 14–cysteine 21.

The protein resides in the secreted. Functionally, sillucin is an antimicrobial agent produced by the thermophilic fungus Rhizomucor pusillus in liquid culture; it is effective against Gram-positive bacteria at the level of RNA metabolism. The polypeptide is Sillucin (Rhizomucor pusillus).